The sequence spans 214 residues: uncharacterized protein (214 aa).

2 consecutive transmembrane segments (helical) span residues 19-39 and 50-70; these read IAIF…SYIL and LALF…LLIG.

Its subcellular location is the cell membrane. This is an uncharacterized protein from Methanocaldococcus jannaschii (strain ATCC 43067 / DSM 2661 / JAL-1 / JCM 10045 / NBRC 100440) (Methanococcus jannaschii).